A 401-amino-acid polypeptide reads, in one-letter code: Probable peptidoglycan glycosyltransferase FtsW (401 aa).

Residues 1-26 (MAEVLRWLRLDLGQSGGLAWERLDWR) lie on the Cytoplasmic side of the membrane. Residues 27–47 (LALTVLALAGLGLVMVGSASV) traverse the membrane as a helical segment. Topologically, residues 48 to 65 (SIAEGATGDPLHYLYRQA) are periplasmic. A helical membrane pass occupies residues 66-86 (VFLAVALMAAVACLHLSLDQF). Residues 87–88 (YR) are Cytoplasmic-facing. Residues 89–109 (GGPVLLVLGFFLLLVVLIPGV) form a helical membrane-spanning segment. The Periplasmic segment spans residues 110–118 (GREVNGATR). A helical membrane pass occupies residues 119-139 (WIPLGLINLQVAEVARVCFII). The Cytoplasmic portion of the chain corresponds to 140 to 154 (YLAGYCVRRHAELPN). Residues 155-175 (TSSAFAVPLAVFSLAAVLLLA) traverse the membrane as a helical segment. At 176-180 (QPDFG) the chain is on the periplasmic side. The chain crosses the membrane as a helical span at residues 181–201 (TALVLMATALGLLFLAGASLW). Position 202 (Arg-202) is a topological domain, cytoplasmic. Residues 203–223 (IGVLGLLLAGAAWLLIVGSPY) form a helical membrane-spanning segment. The Periplasmic segment spans residues 224-278 (RWQRLTTFTDPWADPFNAGFQLTQSLIAIGRGEWFGVGLGASVQKLFYLPEAHTD). Residues 279 to 299 (FLFAVLAEELGLLGVVVVVAL) traverse the membrane as a helical segment. The Cytoplasmic portion of the chain corresponds to 300–322 (FTYLAWRGMQIGLASLRADRPFG). The chain crosses the membrane as a helical span at residues 323–343 (AYLAWGLTISIGLQAFINMAV). The Periplasmic portion of the chain corresponds to 344–354 (TMGLLPTKGLT). Residues 355 to 375 (LPLMSYGGSSLIMTGIALALL) traverse the membrane as a helical segment. Residues 376–401 (LRVDYEARLAAQQPRPRKRPSGRVRP) lie on the Cytoplasmic side of the membrane.

This sequence belongs to the SEDS family. FtsW subfamily.

Its subcellular location is the cell inner membrane. It catalyses the reaction [GlcNAc-(1-&gt;4)-Mur2Ac(oyl-L-Ala-gamma-D-Glu-L-Lys-D-Ala-D-Ala)](n)-di-trans,octa-cis-undecaprenyl diphosphate + beta-D-GlcNAc-(1-&gt;4)-Mur2Ac(oyl-L-Ala-gamma-D-Glu-L-Lys-D-Ala-D-Ala)-di-trans,octa-cis-undecaprenyl diphosphate = [GlcNAc-(1-&gt;4)-Mur2Ac(oyl-L-Ala-gamma-D-Glu-L-Lys-D-Ala-D-Ala)](n+1)-di-trans,octa-cis-undecaprenyl diphosphate + di-trans,octa-cis-undecaprenyl diphosphate + H(+). It participates in cell wall biogenesis; peptidoglycan biosynthesis. In terms of biological role, peptidoglycan polymerase that is essential for cell division. The protein is Probable peptidoglycan glycosyltransferase FtsW of Alkalilimnicola ehrlichii (strain ATCC BAA-1101 / DSM 17681 / MLHE-1).